The sequence spans 293 residues: Energy-coupling factor transporter ATP-binding protein EcfA2 (293 aa).

The 244-residue stretch at 3 to 246 (ITFQKVEHRY…ADELEKIGVD (244 aa)) folds into the ABC transporter domain. ATP is bound at residue 40-47 (GHTGSGKS).

This sequence belongs to the ABC transporter superfamily. Energy-coupling factor EcfA family. In terms of assembly, forms a stable energy-coupling factor (ECF) transporter complex composed of 2 membrane-embedded substrate-binding proteins (S component), 2 ATP-binding proteins (A component) and 2 transmembrane proteins (T component).

The protein resides in the cell membrane. ATP-binding (A) component of a common energy-coupling factor (ECF) ABC-transporter complex. Unlike classic ABC transporters this ECF transporter provides the energy necessary to transport a number of different substrates. This Bacillus thuringiensis (strain Al Hakam) protein is Energy-coupling factor transporter ATP-binding protein EcfA2.